The primary structure comprises 228 residues: Cytidylate kinase (228 aa).

An ATP-binding site is contributed by glycine 17 to threonine 25.

Belongs to the cytidylate kinase family. Type 1 subfamily.

The protein resides in the cytoplasm. The catalysed reaction is CMP + ATP = CDP + ADP. The enzyme catalyses dCMP + ATP = dCDP + ADP. This chain is Cytidylate kinase, found in Burkholderia pseudomallei (strain 1106a).